A 79-amino-acid polypeptide reads, in one-letter code: Large ribosomal subunit protein uL24 (79 aa).

This sequence belongs to the universal ribosomal protein uL24 family. Part of the 50S ribosomal subunit.

Functionally, one of two assembly initiator proteins, it binds directly to the 5'-end of the 23S rRNA, where it nucleates assembly of the 50S subunit. Its function is as follows. One of the proteins that surrounds the polypeptide exit tunnel on the outside of the subunit. The chain is Large ribosomal subunit protein uL24 from Lactobacillus delbrueckii subsp. bulgaricus (strain ATCC BAA-365 / Lb-18).